The sequence spans 515 residues: Centromere protein T (515 aa).

Disordered regions lie at residues 24–156 (ADSR…KRKQ) and 271–411 (LSGK…DPHK). Over residues 29–44 (PMRRRSTRINAQRRRS) the composition is skewed to basic residues. Positions 45-58 (QTPYSNRQGSQTKT) are enriched in polar residues. Threonine 86 bears the Phosphothreonine mark. The segment at 94–375 (ILLTAPESST…DSLPAEQPPP (282 aa)) is flexible stalk domain. The segment covering 296–306 (SSGTRLQSRMS) has biased composition (polar residues). Phosphoserine is present on residues serine 313, serine 333, serine 345, serine 346, serine 357, and serine 376.

This sequence belongs to the CENP-T/CNN1 family. As to quaternary structure, component of the CENPA-CAD complex, composed of CENPI, CENPK, CENPL, CENPO, CENPP, CENPQ, CENPR and CENPS. The CENPA-CAD complex is probably recruited on centromeres by the CENPA-NAC complex, at least composed of CENPA, CENPC, CENPH, CENPM, CENPN, CENPT and CENPU. Identified in a centromeric complex containing histones H2A, H2B, H3 and H4, and at least CENPA, CENPB, CENPC, CENPT, CENPN, HJURP, SUPT16H, SSRP1 and RSF1. Interacts (via N-terminus) with the NDC80 complex. Heterodimer with CENPW; this dimer coassembles with CENPS-CENPX heterodimers at centromeres to form the tetrameric CENP-T-W-S-X complex. Post-translationally, dynamically phosphorylated during the cell cycle. Phosphorylated during G2 phase, metaphase and anaphase, but not during telophase or G1 phase.

The protein localises to the nucleus. It localises to the chromosome. Its subcellular location is the centromere. The protein resides in the kinetochore. In terms of biological role, component of the CENPA-NAC (nucleosome-associated) complex, a complex that plays a central role in assembly of kinetochore proteins, mitotic progression and chromosome segregation. The CENPA-NAC complex recruits the CENPA-CAD (nucleosome distal) complex and may be involved in incorporation of newly synthesized CENPA into centromeres. Part of a nucleosome-associated complex that binds specifically to histone H3-containing nucleosomes at the centromere, as opposed to nucleosomes containing CENPA. Component of the heterotetrameric CENP-T-W-S-X complex that binds and supercoils DNA, and plays an important role in kinetochore assembly. CENPT has a fundamental role in kinetochore assembly and function. It is one of the inner kinetochore proteins, with most further proteins binding downstream. Required for normal chromosome organization and normal progress through mitosis. The chain is Centromere protein T (Cenpt) from Mus musculus (Mouse).